The primary structure comprises 148 residues: Nickel and cobalt resistance protein CnrR (148 aa).

The first 26 residues, 1–26 (MMKSRTRRLSLSTLFGALLGVSVAAA), serve as a signal peptide directing secretion. Over 28–148 (LYYSHRNEAG…LIDALRRGSQ (121 aa)) the chain is Periplasmic. Residues 54–117 (NEREILELKE…AAGDLQRATL (64 aa)) adopt a coiled-coil conformation.

This sequence to A.xylosoxydans NccX.

It localises to the periplasm. In terms of biological role, cnrH alone is able to activate cnr expression, while both CnrY and CrnR (CnrX) are needed for nickel induction of CnrH. Has been suggested to bind nickel. The chain is Nickel and cobalt resistance protein CnrR (cnrR) from Cupriavidus metallidurans (strain ATCC 43123 / DSM 2839 / NBRC 102507 / CH34) (Ralstonia metallidurans).